The chain runs to 270 residues: Tetraspanin-17 (270 aa).

Residues 1 to 19 (MPGKHQHFQEPEVGCCGKY) lie on the Cytoplasmic side of the membrane. A helical membrane pass occupies residues 20-40 (FLFGFNIVFWVLGALFLAIGL). Topologically, residues 41-63 (WAWSEKGVLSNISALTDLGGLDP) are extracellular. N51 carries N-linked (GlcNAc...) asparagine glycosylation. The helical transmembrane segment at 64–84 (VWLFVVVGGVMSVLGFAGCIG) threads the bilayer. The Cytoplasmic segment spans residues 85–94 (ALRENTFLLK). The chain crosses the membrane as a helical span at residues 95–115 (FFSVFLGLIFFLELATGILAF). Topologically, residues 116–234 (VFKDWIRDQL…GQFEKWLQDN (119 aa)) are extracellular. 4 disulfide bridges follow: C155-C223, C156-C188, C172-C182, and C189-C202. N171 carries an N-linked (GlcNAc...) asparagine glycan. Residues 235 to 255 (LIVVAGVFVGIALLQIFGICL) form a helical membrane-spanning segment. The Cytoplasmic segment spans residues 256–270 (AQNLVSDIKAVKANW).

This sequence belongs to the tetraspanin (TM4SF) family. As to quaternary structure, interacts with ADAM10; the interaction influences ADAM10 substrate specificity, endocytosis and turnover.

The protein resides in the cell membrane. Functionally, part of TspanC8 subgroup, composed of 6 members that interact with the transmembrane metalloprotease ADAM10. This interaction is required for ADAM10 exit from the endoplasmic reticulum and for enzymatic maturation and trafficking to the cell surface as well as substrate specificity. Different TspanC8/ADAM10 complexes have distinct substrates. Seems to regulate VE-cadherin expression in endothelial cells probably through interaction with ADAM10, promoting leukocyte transmigration. The polypeptide is Tetraspanin-17 (TSPAN17) (Bos taurus (Bovine)).